A 947-amino-acid polypeptide reads, in one-letter code: Probable outer membrane protein pmp19 (947 aa).

A signal peptide spans 1–19 (MKQMRLWGFLFLSSFCQVS). The 276-residue stretch at 672–947 (IPLQHLCVFG…NAHAGLSLSF (276 aa)) folds into the Autotransporter domain.

Belongs to the PMP outer membrane protein family.

The protein resides in the secreted. It is found in the cell wall. Its subcellular location is the cell outer membrane. The sequence is that of Probable outer membrane protein pmp19 (pmp19) from Chlamydia pneumoniae (Chlamydophila pneumoniae).